The chain runs to 475 residues: UDP-glycosyltransferase 84A4 (475 aa).

His-20 serves as the catalytic Proton acceptor. His-20 is an an anthocyanidin binding site. UDP-alpha-D-glucose contacts are provided by Gln-342, His-357, Trp-360, Asn-361, Ser-362, and Glu-365. Gly-380 is an an anthocyanidin binding site. Asp-381 and Gln-382 together coordinate UDP-alpha-D-glucose.

The protein belongs to the UDP-glycosyltransferase family.

The catalysed reaction is (E)-4-coumarate + UDP-alpha-D-glucose = 4-O-(beta-D-glucosyl)-trans-4-coumarate + UDP + H(+). It catalyses the reaction (E)-ferulate + UDP-alpha-D-glucose = 1-O-[(E)-feruloyl]-beta-D-glucose + UDP. It carries out the reaction (E)-caffeate + UDP-alpha-D-glucose = 1-O-[(E)-caffeoyl]-beta-D-glucose + UDP. The enzyme catalyses (E)-sinapate + UDP-alpha-D-glucose = 1-O-(trans-sinapoyl)-beta-D-glucose + UDP. The catalysed reaction is (E)-cinnamate + UDP-alpha-D-glucose = 1-O-(trans-cinnamoyl)-beta-D-glucose + UDP. Its function is as follows. UDP-glucosyltransferase that forms glucose esters with phenylpropanoids. Glucosylates 4-coumarate, ferulate, caffeate, sinapate and cinnamate. The sequence is that of UDP-glycosyltransferase 84A4 from Arabidopsis thaliana (Mouse-ear cress).